We begin with the raw amino-acid sequence, 333 residues long: Forkhead box protein unc-130 (333 aa).

The segment at 1–126 is disordered; that stretch reads MLFSMESILS…MSGHRKSSHA (126 aa). A compositionally biased stretch (basic and acidic residues) spans 14 to 24; the sequence is PKLEPPPKLEP. Positions 37-50 are enriched in polar residues; sequence RSNTRLSEPSTSAS. The span at 52-62 shows a compositional bias: basic and acidic residues; it reads LEHDLKFGESR. The span at 98–110 shows a compositional bias: acidic residues; the sequence is SSDDAKDDDDDDD. Residues 127–221 constitute a DNA-binding region (fork-head); sequence KPPYSYIALI…DNGSFLRRRK (95 aa). Positions 304-333 are disordered; that stretch reads APVSSGQKRTSSSSSPNENGSSAVSDKLSA. Positions 307–333 are enriched in low complexity; sequence SSGQKRTSSSSSPNENGSSAVSDKLSA.

As to expression, expressed in ventral body wall muscle. Expressed in the structural cells and two neurons of each ray in the male tail.

Its subcellular location is the nucleus. Probable transcription factor. Binds to DNA sequence motif 5'-CTGTTTCA-3'. Required for the migration of distal tip cells (DTC) and axonal growth-cones along the dorsal-ventral axis of the body wall, acting by cell autonomous repression of unc-129/TGF-beta expression in ventral body muscle during embyogenesis. Binds to the promoter region of the unc-129 gene. Plays a role in dorsal-ventral patterning and fate specification of the postembryonic mesoderm. Involved in male tail morphogenesis and in embryogenesis. Plays a role in the development of sensory neurons and is required to repress AWA fate and promote ASG fate in the ASG chemosensory neurons. Regulates expression of a class of small RNAs, known as 21U-RNAs. The sequence is that of Forkhead box protein unc-130 from Caenorhabditis elegans.